A 306-amino-acid polypeptide reads, in one-letter code: tRNA dimethylallyltransferase 2 (306 aa).

11–18 (GPTASGKT) is an ATP binding site. Position 13-18 (13-18 (TASGKT)) interacts with substrate. Residues 36–39 (DSRQ) are interaction with substrate tRNA.

Belongs to the IPP transferase family. In terms of assembly, monomer. Requires Mg(2+) as cofactor.

It carries out the reaction adenosine(37) in tRNA + dimethylallyl diphosphate = N(6)-dimethylallyladenosine(37) in tRNA + diphosphate. Its function is as follows. Catalyzes the transfer of a dimethylallyl group onto the adenine at position 37 in tRNAs that read codons beginning with uridine, leading to the formation of N6-(dimethylallyl)adenosine (i(6)A). This chain is tRNA dimethylallyltransferase 2, found in Bacteroides thetaiotaomicron (strain ATCC 29148 / DSM 2079 / JCM 5827 / CCUG 10774 / NCTC 10582 / VPI-5482 / E50).